The sequence spans 213 residues: Phosphoheptose isomerase (213 aa).

An SIS domain is found at 50-208 (MAETFEGGGR…IDLVERMLGY (159 aa)). 65-67 (NGG) serves as a coordination point for substrate. The Zn(2+) site is built by histidine 74 and glutamate 78. Substrate is bound by residues glutamate 78, 109 to 110 (ND), 135 to 137 (STS), serine 140, and glutamine 188. Positions 188 and 196 each coordinate Zn(2+).

It belongs to the SIS family. GmhA subfamily. Zn(2+) is required as a cofactor.

It localises to the cytoplasm. The enzyme catalyses 2 D-sedoheptulose 7-phosphate = D-glycero-alpha-D-manno-heptose 7-phosphate + D-glycero-beta-D-manno-heptose 7-phosphate. Its pathway is carbohydrate biosynthesis; D-glycero-D-manno-heptose 7-phosphate biosynthesis; D-glycero-alpha-D-manno-heptose 7-phosphate and D-glycero-beta-D-manno-heptose 7-phosphate from sedoheptulose 7-phosphate: step 1/1. Its function is as follows. Catalyzes the isomerization of sedoheptulose 7-phosphate in D-glycero-D-manno-heptose 7-phosphate. The chain is Phosphoheptose isomerase from Chlorobium phaeovibrioides (strain DSM 265 / 1930) (Prosthecochloris vibrioformis (strain DSM 265)).